The sequence spans 360 residues: Dihydroorotate dehydrogenase (quinone) (360 aa).

Residues 67–71 and Thr91 each bind FMN; that span reads AGLDK. Substrate is bound at residue Lys71. 116 to 120 lines the substrate pocket; it reads NRMGF. 2 residues coordinate FMN: Asn145 and Asn176. Asn176 lines the substrate pocket. Ser179 acts as the Nucleophile in catalysis. Substrate is bound at residue Asn181. FMN contacts are provided by Lys222 and Ser250. Position 251–252 (251–252) interacts with substrate; it reads NT. FMN-binding positions include Gly272, Gly301, and 322 to 323; that span reads YS.

The protein belongs to the dihydroorotate dehydrogenase family. Type 2 subfamily. In terms of assembly, monomer. FMN serves as cofactor.

It is found in the cell membrane. The catalysed reaction is (S)-dihydroorotate + a quinone = orotate + a quinol. It functions in the pathway pyrimidine metabolism; UMP biosynthesis via de novo pathway; orotate from (S)-dihydroorotate (quinone route): step 1/1. Functionally, catalyzes the conversion of dihydroorotate to orotate with quinone as electron acceptor. This chain is Dihydroorotate dehydrogenase (quinone), found in Deinococcus deserti (strain DSM 17065 / CIP 109153 / LMG 22923 / VCD115).